Consider the following 96-residue polypeptide: ESAT-6-like protein EsxR (96 aa).

It belongs to the WXG100 family. ESAT-6 subfamily.

It localises to the secreted. This chain is ESAT-6-like protein EsxR, found in Mycobacterium leprae (strain TN).